The chain runs to 69 residues: uncharacterized protein (69 aa).

The disordered stretch occupies residues 22-48; the sequence is LFRKSRELSPIKPVRTPTPPAPTPPPM. Over residues 37–48 the composition is skewed to pro residues; the sequence is TPTPPAPTPPPM.

This is an uncharacterized protein from Lepidoptera (butterflies and moths).